The primary structure comprises 346 residues: S-adenosylmethionine:tRNA ribosyltransferase-isomerase (346 aa).

It belongs to the QueA family. As to quaternary structure, monomer.

The protein localises to the cytoplasm. The catalysed reaction is 7-aminomethyl-7-carbaguanosine(34) in tRNA + S-adenosyl-L-methionine = epoxyqueuosine(34) in tRNA + adenine + L-methionine + 2 H(+). Its pathway is tRNA modification; tRNA-queuosine biosynthesis. Transfers and isomerizes the ribose moiety from AdoMet to the 7-aminomethyl group of 7-deazaguanine (preQ1-tRNA) to give epoxyqueuosine (oQ-tRNA). The protein is S-adenosylmethionine:tRNA ribosyltransferase-isomerase of Borreliella afzelii (strain PKo) (Borrelia afzelii).